The following is a 329-amino-acid chain: MDGIAFILIVGAILVFISLFFAIVPVGLWISAFAANVRVSIFTLIGMRLRRVVPSRVINPLIKATKAGINVSINKLEAHYLAGGNVDRVVNALIAAQRANIPLEFERAAAIDLAGRNVLEAVQMSVNPKVIETPVVAAIAKDGIELRAKARVTVRANIDRLVGGAGEQTIIARVGEGVVTTVGSATDHKQVLENPDAISKTVLSKGLDAGTAFEILSIDIADIDVGRNVGAQLQTDQAEADKRIAQAKAEERRAMAVAREQEMKAMVQEMRAKVVEAEAEVPKALAAALREGKIGVLDYYHLQNLIADTQMRDSISKMSKHDDSSSDKK.

Transmembrane regions (helical) follow at residues 4-24 (IAFI…FAIV) and 26-46 (VGLW…TLIG).

This sequence belongs to the flotillin-like FloA family. As to quaternary structure, homooligomerizes.

It localises to the cell membrane. It is found in the membrane raft. Functionally, found in functional membrane microdomains (FMM) that may be equivalent to eukaryotic membrane rafts. FMMs are highly dynamic and increase in number as cells age. Flotillins are thought to be important factors in membrane fluidity. The chain is Flotillin-like protein FloA from Acetivibrio thermocellus (strain ATCC 27405 / DSM 1237 / JCM 9322 / NBRC 103400 / NCIMB 10682 / NRRL B-4536 / VPI 7372) (Clostridium thermocellum).